The chain runs to 26 residues: Hemocyanin subunit 3 (26 aa).

Belongs to the tyrosinase family. Hemocyanin subfamily. As to expression, hemolymph.

It is found in the secreted. The protein resides in the extracellular space. Hemocyanins are copper-containing oxygen carriers occurring freely dissolved in the hemolymph of many mollusks and arthropods. This Homarus americanus (American lobster) protein is Hemocyanin subunit 3.